A 298-amino-acid polypeptide reads, in one-letter code: Triosephosphate isomerase, chloroplastic (298 aa).

Pro residues predominate over residues 1–18 (MAARRPSPPPASPPPPRP). The tract at residues 1-32 (MAARRPSPPPASPPPPRPRSTTTTRTTSSASA) is disordered. The transit peptide at 1–43 (MAARRPSPPPASPPPPRPRSTTTTRTTSSASAAPAAAQRLVAM) directs the protein to the chloroplast. Residues 19 to 32 (RSTTTTRTTSSASA) are compositionally biased toward low complexity. The substrate site is built by asparagine 54 and lysine 56. The Electrophile role is filled by histidine 138. Cysteine 186 bears the Cysteine derivative mark. Glutamate 208 (proton acceptor) is an active-site residue.

Belongs to the triosephosphate isomerase family. As to quaternary structure, homodimer.

It localises to the plastid. The protein localises to the chloroplast. The catalysed reaction is D-glyceraldehyde 3-phosphate = dihydroxyacetone phosphate. It functions in the pathway carbohydrate biosynthesis; Calvin cycle. The protein is Triosephosphate isomerase, chloroplastic of Secale cereale (Rye).